We begin with the raw amino-acid sequence, 286 residues long: Neuferricin homolog (286 aa).

Positions 1 to 23 are cleaved as a signal peptide; it reads MFGFVKYLFKLQFLFILAAVLAG. Residues 61–145 enclose the Cytochrome b5 heme-binding domain; that stretch reads ATVLTSAELS…KPNDLLGLAN (85 aa). Positions 176-200 form a coiled coil; that stretch reads HKYLALLEQAQIAKAEVDELRSKYP.

The protein belongs to the cytochrome b5 family. MAPR subfamily.

The protein localises to the secreted. Its function is as follows. Heme-binding protein. This Drosophila pseudoobscura pseudoobscura (Fruit fly) protein is Neuferricin homolog.